We begin with the raw amino-acid sequence, 199 residues long: Recombination protein RecR (199 aa).

The C4-type zinc-finger motif lies at 57-72 (CSICGNITDKDPCYVC). Positions 80–176 (TIVCVVQDSR…RVTRIAHGLP (97 aa)) constitute a Toprim domain.

The protein belongs to the RecR family.

Its function is as follows. May play a role in DNA repair. It seems to be involved in an RecBC-independent recombinational process of DNA repair. It may act with RecF and RecO. This is Recombination protein RecR from Exiguobacterium sibiricum (strain DSM 17290 / CCUG 55495 / CIP 109462 / JCM 13490 / 255-15).